Consider the following 384-residue polypeptide: 8-amino-7-oxononanoate synthase (384 aa).

Arg21 contributes to the substrate binding site. 108-109 (GF) lines the pyridoxal 5'-phosphate pocket. Residue His133 coordinates substrate. Residues Ser179, His207, and Thr233 each coordinate pyridoxal 5'-phosphate. Residue Lys236 is modified to N6-(pyridoxal phosphate)lysine. Thr352 contacts substrate.

The protein belongs to the class-II pyridoxal-phosphate-dependent aminotransferase family. BioF subfamily. In terms of assembly, homodimer. Pyridoxal 5'-phosphate serves as cofactor.

It carries out the reaction 6-carboxyhexanoyl-[ACP] + L-alanine + H(+) = (8S)-8-amino-7-oxononanoate + holo-[ACP] + CO2. It participates in cofactor biosynthesis; biotin biosynthesis. Its function is as follows. Catalyzes the decarboxylative condensation of pimeloyl-[acyl-carrier protein] and L-alanine to produce 8-amino-7-oxononanoate (AON), [acyl-carrier protein], and carbon dioxide. The chain is 8-amino-7-oxononanoate synthase from Escherichia coli O7:K1 (strain IAI39 / ExPEC).